The chain runs to 508 residues: Maturase K (508 aa).

The protein belongs to the intron maturase 2 family. MatK subfamily.

It is found in the plastid. Its subcellular location is the chloroplast. Its function is as follows. Usually encoded in the trnK tRNA gene intron. Probably assists in splicing its own and other chloroplast group II introns. The chain is Maturase K from Verbena rigida (Tuberous vervain).